Consider the following 1316-residue polypeptide: DNA-directed RNA polymerase subunit beta' (1316 aa).

Zn(2+) contacts are provided by cysteine 60, cysteine 62, cysteine 75, and cysteine 78. Mg(2+) is bound by residues aspartate 535, aspartate 537, and aspartate 539. Zn(2+)-binding residues include cysteine 891, cysteine 968, cysteine 975, and cysteine 978.

This sequence belongs to the RNA polymerase beta' chain family. As to quaternary structure, the RNAP catalytic core consists of 2 alpha, 1 beta, 1 beta' and 1 omega subunit. When a sigma factor is associated with the core the holoenzyme is formed, which can initiate transcription. It depends on Mg(2+) as a cofactor. Zn(2+) is required as a cofactor.

It catalyses the reaction RNA(n) + a ribonucleoside 5'-triphosphate = RNA(n+1) + diphosphate. DNA-dependent RNA polymerase catalyzes the transcription of DNA into RNA using the four ribonucleoside triphosphates as substrates. In Mycobacterium bovis (strain BCG / Pasteur 1173P2), this protein is DNA-directed RNA polymerase subunit beta'.